The primary structure comprises 293 residues: Protein Pat (293 aa).

In terms of domain architecture, BEN spans 187–287; it reads LPDIILNPLD…LLLRTRQDRA (101 aa).

As to quaternary structure, interacts with poc1b. In terms of tissue distribution, an mRNA and protein component of germ plasm and primordial germ cells (PGCs) throughout oogenesis and early development, being first localized to the granulo-fibrillar material (GFM) of the mitochondrial cloud in stage I and II oocytes and to the periphery of mature germinal granules both in oocytes and in embryos. Shows some somatic expression including the ectodermal cells of tailbud embryos. In adults, only expressed in ovaries.

The protein localises to the cytoplasm. It is found in the nucleus. Its function is as follows. Probably plays a role in germ plasm formation, positioning and maintenance. The protein is Protein Pat of Xenopus laevis (African clawed frog).